The sequence spans 137 residues: Large ribosomal subunit protein bL17 (137 aa).

Belongs to the bacterial ribosomal protein bL17 family. As to quaternary structure, part of the 50S ribosomal subunit. Contacts protein L32.

The chain is Large ribosomal subunit protein bL17 from Bradyrhizobium sp. (strain ORS 278).